Reading from the N-terminus, the 372-residue chain is MVKFNNIIYDPQVSDKKFPVQASDPEREAKLVVLQPVGYPFVCNLMEAPRIDAVNKELFEIYARDQWEGFRAAEGSYLFDQKLLPDYAFKIIRAHPDGSKITRNTSIILLENDREEFHEVRSSITMDDVIGQEDAKIKCRIIMKYLEDPDRFRDWAPRNVLFHGSPGTGKTMLAKSLANELKVPLYLIKATSLIGEHVGDGARQIHELYELASKTAPSVIFIDEMDAIGLDRRYQSLRGDVSEVVNALLTEMDGINQNWGVVTIGATNNPELLDKAIRSRFEEEIEFKLPDDEERKLMLEKYIETMPLKVDFPVDKLVKLTREMSGRDIKDRVLKTALHRAIAEDSESVRAEHIEYALKERKVSGEPKHMFA.

164–171 (GSPGTGKT) serves as a coordination point for ATP.

It belongs to the AAA ATPase family.

The 26S proteasome is involved in the ATP-dependent degradation of ubiquitinated proteins. The regulatory (or ATPase) complex confers ATP dependency and substrate specificity to the 26S complex. This Methanothermobacter thermautotrophicus (strain ATCC 29096 / DSM 1053 / JCM 10044 / NBRC 100330 / Delta H) (Methanobacterium thermoautotrophicum) protein is Putative 26S proteasome regulatory subunit homolog MTH_1011.